The following is a 104-amino-acid chain: Large ribosomal subunit protein bL21 (104 aa).

This sequence belongs to the bacterial ribosomal protein bL21 family. Part of the 50S ribosomal subunit. Contacts protein L20.

This protein binds to 23S rRNA in the presence of protein L20. This is Large ribosomal subunit protein bL21 from Lactococcus lactis subsp. cremoris (strain MG1363).